The sequence spans 321 residues: Low affinity immunoglobulin epsilon Fc receptor (321 aa).

Residues 1–21 (MEEGQYSEIEELPRRRCCRRG) lie on the Cytoplasmic side of the membrane. 2 S-palmitoyl cysteine lipidation sites follow: Cys-17 and Cys-18. A helical; Signal-anchor for type II membrane protein membrane pass occupies residues 22-47 (TQIVLLGLVTAALWAGLLTLLLLWHW). Topologically, residues 48–321 (DTTQSLKQLE…LPTPSAPLHS (274 aa)) are extracellular. N-linked (GlcNAc...) asparagine glycosylation is present at Asn-63. The tract at residues 66 to 85 (QVSKNLESHHGDQMAQKSQS) is disordered. Repeats lie at residues 69–89 (KNLE…TQIS), 90–110 (QELE…LELS), and 111–131 (WNLN…LNER). 4 cysteine pairs are disulfide-bonded: Cys-160/Cys-288, Cys-163/Cys-174, Cys-191/Cys-282, and Cys-259/Cys-273. The 123-residue stretch at 162–284 (TCPEKWINFQ…RKLGAWVCDR (123 aa)) folds into the C-type lectin domain. Positions 249, 251, 269, and 270 each coordinate Ca(2+). Positions 290–321 (PPASEGSAESMGPDSRPDPDGRLPTPSAPLHS) are disordered. Residue Ser-296 is glycosylated (O-linked (Xyl...) (chondroitin sulfate) serine).

In terms of assembly, homotrimer. Interacts (via C-type lectin domain) with IGHE (via CH3 region); this interaction regulates IgE homeostasis. Interacts (via the C-terminus) with CR2/CD21 (via Sushi domain 1 and 2). In terms of processing, N- and O-glycosylated. Post-translationally, the secreted form sCD23 is produced by ADAM10-mediated ectodomain shedding. In terms of tissue distribution, detected in urine (at protein level).

The protein resides in the cell membrane. Its subcellular location is the secreted. Functionally, low-affinity receptor for immunoglobulin E (IgE) and CR2/CD21. Has essential roles in the regulation of IgE production and in the differentiation of B cells. On B cells, initiates IgE-dependent antigen uptake and presentation to T cells. On macrophages, upon IgE binding and antigen cross-linking induces intracellular killing of parasites through activation of L-Arginine-nitric oxide pathway. The sequence is that of Low affinity immunoglobulin epsilon Fc receptor (FCER2) from Homo sapiens (Human).